The primary structure comprises 359 residues: Photosystem II protein D1 1 (359 aa).

3 helical membrane passes run 29-46 (YVGW…AATI), 118-133 (HFLI…EWEL), and 142-156 (WICV…AASA). A chlorophyll a-binding site is contributed by histidine 118. Pheophytin a is bound at residue tyrosine 126. 2 residues coordinate [CaMn4O5] cluster: aspartate 170 and glutamate 189. A helical membrane pass occupies residues 197–218 (FHMLGVAGVFGGSLFSAMHGSL). A chlorophyll a-binding site is contributed by histidine 198. Residues histidine 215 and 264–265 (SF) contribute to the a quinone site. Position 215 (histidine 215) interacts with Fe cation. Residue histidine 272 coordinates Fe cation. The helical transmembrane segment at 274 to 288 (FLAAWPVVGIWFTAL) threads the bilayer. Positions 332, 333, 342, and 344 each coordinate [CaMn4O5] cluster. A propeptide spanning residues 345-359 (AAESTPVALQAPAIG) is cleaved from the precursor.

The protein belongs to the reaction center PufL/M/PsbA/D family. As to quaternary structure, PSII is composed of 1 copy each of membrane proteins PsbA, PsbB, PsbC, PsbD, PsbE, PsbF, PsbH, PsbI, PsbJ, PsbK, PsbL, PsbM, PsbT, PsbX, PsbY, PsbZ, Psb30/Ycf12, peripheral proteins PsbO, CyanoQ (PsbQ), PsbU, PsbV and a large number of cofactors. It forms dimeric complexes. The D1/D2 heterodimer binds P680, chlorophylls that are the primary electron donor of PSII, and subsequent electron acceptors. It shares a non-heme iron and each subunit binds pheophytin, quinone, additional chlorophylls, carotenoids and lipids. D1 provides most of the ligands for the Mn4-Ca-O5 cluster of the oxygen-evolving complex (OEC). There is also a Cl(-1) ion associated with D1 and D2, which is required for oxygen evolution. The PSII complex binds additional chlorophylls, carotenoids and specific lipids. serves as cofactor. Post-translationally, tyr-161 forms a radical intermediate that is referred to as redox-active TyrZ, YZ or Y-Z. In terms of processing, C-terminally processed by CtpA; processing is essential to allow assembly of the oxygen-evolving complex and thus photosynthetic growth.

Its subcellular location is the cellular thylakoid membrane. The enzyme catalyses 2 a plastoquinone + 4 hnu + 2 H2O = 2 a plastoquinol + O2. Photosystem II (PSII) is a light-driven water:plastoquinone oxidoreductase that uses light energy to abstract electrons from H(2)O, generating O(2) and a proton gradient subsequently used for ATP formation. It consists of a core antenna complex that captures photons, and an electron transfer chain that converts photonic excitation into a charge separation. The D1/D2 (PsbA/PsbD) reaction center heterodimer binds P680, the primary electron donor of PSII as well as several subsequent electron acceptors. In Parasynechococcus marenigrum (strain WH8102), this protein is Photosystem II protein D1 1.